A 171-amino-acid polypeptide reads, in one-letter code: 3-hydroxydecanoyl-[acyl-carrier-protein] dehydratase (171 aa).

His70 is a catalytic residue.

Belongs to the thioester dehydratase family. FabA subfamily. Homodimer.

It is found in the cytoplasm. The catalysed reaction is a (3R)-hydroxyacyl-[ACP] = a (2E)-enoyl-[ACP] + H2O. The enzyme catalyses (3R)-hydroxydecanoyl-[ACP] = (2E)-decenoyl-[ACP] + H2O. It carries out the reaction (2E)-decenoyl-[ACP] = (3Z)-decenoyl-[ACP]. Its pathway is lipid metabolism; fatty acid biosynthesis. Functionally, necessary for the introduction of cis unsaturation into fatty acids. Catalyzes the dehydration of (3R)-3-hydroxydecanoyl-ACP to E-(2)-decenoyl-ACP and then its isomerization to Z-(3)-decenoyl-ACP. Can catalyze the dehydratase reaction for beta-hydroxyacyl-ACPs with saturated chain lengths up to 16:0, being most active on intermediate chain length. The sequence is that of 3-hydroxydecanoyl-[acyl-carrier-protein] dehydratase from Vibrio campbellii (strain ATCC BAA-1116).